A 29-amino-acid chain; its full sequence is Cyclotide psyleio D (29 aa).

The segment at residues 1-29 (GLPVCGESCFGGTCNTPGCSCTWPVCTRD) is a cross-link (cyclopeptide (Gly-Asp)). Disulfide bonds link Cys-5–Cys-19, Cys-9–Cys-21, and Cys-14–Cys-26.

In terms of processing, this is a cyclic peptide.

Probably participates in a plant defense mechanism. The sequence is that of Cyclotide psyleio D from Psychotria brachyceras.